The following is a 969-amino-acid chain: Defective in germ line development protein 3 (969 aa).

Positions 34–81 are gld-2-binding; that stretch reads MAENAASARKLFVSSALKDIIVNPENFYHDFQQSAQMAEDANQRRQVS. KH domains follow at residues 34-109, 113-187, 189-259, 270-342, and 344-419; these read MAEN…MIEI, RVTL…MRRN, HFTV…NEIL, FTLH…IMDL, and PISM…YQKV. The gls-1-binding stretch occupies residues 57-471; it reads PENFYHDFQQ…GSNGRRHRSS (415 aa). Disordered stretches follow at residues 459–508 and 602–711; these read LSDG…SFSE and EQHR…GDIH. A compositionally biased stretch (polar residues) spans 487 to 508; sequence KQFSESSGGPSRSHTRVSSFSE. Over residues 631–644 the composition is skewed to low complexity; it reads PSSSTGSYYPSTTP. Over residues 647 to 659 the composition is skewed to basic and acidic residues; sequence RVYEQVREDDLRS. Residues 664–676 are compositionally biased toward polar residues; it reads RRTSVNGDDQNVE. Composition is skewed to basic and acidic residues over residues 677 to 687 and 694 to 711; these read SMHDQGYERQY and LQKDDQQRWKTGSRGDIH. The interval 769 to 969 is gls-1-binding; it reads LYMHESPHND…DLSLDETSTY (201 aa). The tract at residues 860–949 is fbf-1-binding; sequence NGVTKTILEP…VLNEKEKEIA (90 aa). The segment at 950 to 969 is disordered; the sequence is DKSIESTVTQDLSLDETSTY. Polar residues predominate over residues 954-969; sequence ESTVTQDLSLDETSTY.

Interacts (via its KH1 domain) with gld-2. Isoform A but not isoform B interacts specifically with fbf-1 and fbf-2 in an RNA-independent manner. Isoform A interacts with gls-1 isoform C. Expressed in the germline (at protein level). In adult hermaphrodites, first detected in the transition zone (TZ), weakly expressed in the early mitotic region and in pachytene germ cells, and becomes more abundantly expressed as germ cells enter diakinesis (at protein level). Expressed in primary spermatocytes, but not in secondary spermatocytes or adult sperm (at protein level).

It is found in the cytoplasm. The protein resides in the cytoplasmic granule. The protein localises to the perinuclear region. In terms of biological role, required maternally for germline survival and embryogenesis. Forms a complex with gls-1 which promotes the oogenic cell fate by freeing the translational repressor fbf to repress sperm promoting factors. Promotes maturation of primary spermatocytes to mature sperm. Required during hermaphrodite development to promote sperm fate, which is critical for determining the normal number of sperm. Promotion of sperm fate is at the expense of oogenesis, possibly through the negative regulation of fbf. Required during male development for the continued production of sperm and inhibition of oogenesis. Together with gld-2, promotes the transition from mitosis to meiosis. Required for polyadenylation of neg-1 mRNA during embryogenesis. This Caenorhabditis elegans protein is Defective in germ line development protein 3.